Here is a 160-residue protein sequence, read N- to C-terminus: Ribosomal RNA large subunit methyltransferase H (160 aa).

Residues L76, G108, and 127-132 (LGKMTW) each bind S-adenosyl-L-methionine.

Belongs to the RNA methyltransferase RlmH family. Homodimer.

Its subcellular location is the cytoplasm. The enzyme catalyses pseudouridine(1915) in 23S rRNA + S-adenosyl-L-methionine = N(3)-methylpseudouridine(1915) in 23S rRNA + S-adenosyl-L-homocysteine + H(+). Its function is as follows. Specifically methylates the pseudouridine at position 1915 (m3Psi1915) in 23S rRNA. The polypeptide is Ribosomal RNA large subunit methyltransferase H (Rhizobium etli (strain ATCC 51251 / DSM 11541 / JCM 21823 / NBRC 15573 / CFN 42)).